Here is an 80-residue protein sequence, read N- to C-terminus: Exodeoxyribonuclease 7 small subunit (80 aa).

The protein belongs to the XseB family. Heterooligomer composed of large and small subunits.

The protein resides in the cytoplasm. It catalyses the reaction Exonucleolytic cleavage in either 5'- to 3'- or 3'- to 5'-direction to yield nucleoside 5'-phosphates.. Its function is as follows. Bidirectionally degrades single-stranded DNA into large acid-insoluble oligonucleotides, which are then degraded further into small acid-soluble oligonucleotides. The chain is Exodeoxyribonuclease 7 small subunit from Pseudoalteromonas translucida (strain TAC 125).